We begin with the raw amino-acid sequence, 276 residues long: Octanoyltransferase LipM (276 aa).

Residues 32–247 (GALPPVIRFY…GFEKGLDIKL (216 aa)) enclose the BPL/LPL catalytic domain. Residue C149 is the Acyl-thioester intermediate of the active site.

Belongs to the octanoyltransferase LipM family. In terms of assembly, monomer.

The catalysed reaction is octanoyl-[ACP] + L-lysyl-[protein] = N(6)-octanoyl-L-lysyl-[protein] + holo-[ACP] + H(+). The protein operates within protein modification; protein lipoylation via endogenous pathway; protein N(6)-(lipoyl)lysine from octanoyl-[acyl-carrier-protein]. Its function is as follows. Catalyzes the transfer of endogenously produced octanoic acid from octanoyl-acyl-carrier-protein onto the lipoyl domain of GcvH, an intermediate carrier during protein lipoylation. This chain is Octanoyltransferase LipM, found in Macrococcus caseolyticus (strain JCSC5402) (Macrococcoides caseolyticum).